A 358-amino-acid polypeptide reads, in one-letter code: Photosystem II protein D1 2 (358 aa).

The next 3 membrane-spanning stretches (helical) occupy residues 28–45, 117–132, and 141–155; these read YVGWFGVLMIPCLLAATI, HFLIGISAYMGRQWEL, and WICVAYAAPLSAAMV. A chlorophyll a-binding site is contributed by H117. Residue Y125 coordinates pheophytin a. 2 residues coordinate [CaMn4O5] cluster: D169 and E188. Residues 196 to 217 traverse the membrane as a helical segment; the sequence is FHMLGVAGVFGGSLFSAMHGSL. H197 is a binding site for chlorophyll a. A quinone contacts are provided by residues H214 and 263–264; that span reads SF. H214 provides a ligand contact to Fe cation. H271 contributes to the Fe cation binding site. The helical transmembrane segment at 273–287 threads the bilayer; that stretch reads FLAAWPVVGIWFTSM. H331, E332, D341, and A343 together coordinate [CaMn4O5] cluster. A propeptide spanning residues 344–358 is cleaved from the precursor; the sequence is TTESAPVALQAPAVG.

Belongs to the reaction center PufL/M/PsbA/D family. PSII is composed of 1 copy each of membrane proteins PsbA, PsbB, PsbC, PsbD, PsbE, PsbF, PsbH, PsbI, PsbJ, PsbK, PsbL, PsbM, PsbT, PsbX, PsbY, PsbZ, Psb30/Ycf12, peripheral proteins PsbO, CyanoQ (PsbQ), PsbU, PsbV and a large number of cofactors. It forms dimeric complexes. The D1/D2 heterodimer binds P680, chlorophylls that are the primary electron donor of PSII, and subsequent electron acceptors. It shares a non-heme iron and each subunit binds pheophytin, quinone, additional chlorophylls, carotenoids and lipids. D1 provides most of the ligands for the Mn4-Ca-O5 cluster of the oxygen-evolving complex (OEC). There is also a Cl(-1) ion associated with D1 and D2, which is required for oxygen evolution. The PSII complex binds additional chlorophylls, carotenoids and specific lipids. is required as a cofactor. Post-translationally, tyr-160 forms a radical intermediate that is referred to as redox-active TyrZ, YZ or Y-Z. In terms of processing, C-terminally processed by CtpA; processing is essential to allow assembly of the oxygen-evolving complex and thus photosynthetic growth.

The protein resides in the cellular thylakoid membrane. It carries out the reaction 2 a plastoquinone + 4 hnu + 2 H2O = 2 a plastoquinol + O2. Its function is as follows. Photosystem II (PSII) is a light-driven water:plastoquinone oxidoreductase that uses light energy to abstract electrons from H(2)O, generating O(2) and a proton gradient subsequently used for ATP formation. It consists of a core antenna complex that captures photons, and an electron transfer chain that converts photonic excitation into a charge separation. The D1/D2 (PsbA/PsbD) reaction center heterodimer binds P680, the primary electron donor of PSII as well as several subsequent electron acceptors. The sequence is that of Photosystem II protein D1 2 from Synechococcus sp. (strain RCC307).